The sequence spans 316 residues: Thymidylate synthase (316 aa).

DUMP contacts are provided by residues arginine 23 and 178–179 (RR). Cysteine 198 (nucleophile) is an active-site residue. DUMP-binding positions include 218–221 (RSAD), asparagine 229, and 259–261 (HLY). Aspartate 221 lines the (6R)-5,10-methylene-5,6,7,8-tetrahydrofolate pocket. A (6R)-5,10-methylene-5,6,7,8-tetrahydrofolate-binding site is contributed by alanine 315.

This sequence belongs to the thymidylate synthase family. Bacterial-type ThyA subfamily. As to quaternary structure, homodimer.

Its subcellular location is the cytoplasm. The enzyme catalyses dUMP + (6R)-5,10-methylene-5,6,7,8-tetrahydrofolate = 7,8-dihydrofolate + dTMP. It participates in pyrimidine metabolism; dTTP biosynthesis. In terms of biological role, catalyzes the reductive methylation of 2'-deoxyuridine-5'-monophosphate (dUMP) to 2'-deoxythymidine-5'-monophosphate (dTMP) while utilizing 5,10-methylenetetrahydrofolate (mTHF) as the methyl donor and reductant in the reaction, yielding dihydrofolate (DHF) as a by-product. This enzymatic reaction provides an intracellular de novo source of dTMP, an essential precursor for DNA biosynthesis. In Lacticaseibacillus casei (Lactobacillus casei), this protein is Thymidylate synthase.